A 704-amino-acid chain; its full sequence is DNA ligase (704 aa).

Residues 43 to 47 (DADYD), 92 to 93 (SL), and Glu-124 contribute to the NAD(+) site. The active-site N6-AMP-lysine intermediate is Lys-126. NAD(+)-binding residues include Arg-147, Glu-182, Lys-298, and Lys-322. The Zn(2+) site is built by Cys-427, Cys-430, Cys-445, and Cys-451. Positions 625-704 (PVASPVAGKI…DGWLRLIGDA (80 aa)) constitute a BRCT domain.

It belongs to the NAD-dependent DNA ligase family. LigA subfamily. Mg(2+) is required as a cofactor. Mn(2+) serves as cofactor.

It catalyses the reaction NAD(+) + (deoxyribonucleotide)n-3'-hydroxyl + 5'-phospho-(deoxyribonucleotide)m = (deoxyribonucleotide)n+m + AMP + beta-nicotinamide D-nucleotide.. In terms of biological role, DNA ligase that catalyzes the formation of phosphodiester linkages between 5'-phosphoryl and 3'-hydroxyl groups in double-stranded DNA using NAD as a coenzyme and as the energy source for the reaction. It is essential for DNA replication and repair of damaged DNA. The sequence is that of DNA ligase from Cereibacter sphaeroides (strain ATCC 17023 / DSM 158 / JCM 6121 / CCUG 31486 / LMG 2827 / NBRC 12203 / NCIMB 8253 / ATH 2.4.1.) (Rhodobacter sphaeroides).